The following is a 274-amino-acid chain: 2,3,4,5-tetrahydropyridine-2,6-dicarboxylate N-succinyltransferase (274 aa).

It belongs to the transferase hexapeptide repeat family.

The protein resides in the cytoplasm. It catalyses the reaction (S)-2,3,4,5-tetrahydrodipicolinate + succinyl-CoA + H2O = (S)-2-succinylamino-6-oxoheptanedioate + CoA. It functions in the pathway amino-acid biosynthesis; L-lysine biosynthesis via DAP pathway; LL-2,6-diaminopimelate from (S)-tetrahydrodipicolinate (succinylase route): step 1/3. The sequence is that of 2,3,4,5-tetrahydropyridine-2,6-dicarboxylate N-succinyltransferase from Yersinia pseudotuberculosis serotype IB (strain PB1/+).